A 657-amino-acid polypeptide reads, in one-letter code: MSKIIELPDILANQIAAGEVVERPSSVVKELVENAIDAGSSQITIEVEESGLKKIQITDNGEGMTSEDAVLSLRRHATSKIKSQSDLFRIRTLGFRGEALPSIASISLMTIKTATEQGKQGTLLVAKGGNIEKQEVVSSPRGTKILVENLFFNTPARLKYMKSLQSELAHIIDIVNRLSLAHPEVAFTLINDGKEMTKTSGTGDLRQAIAGIYGLNTAKKMIEISNADLDFEISGYVSLPELTRANRNYITLLINGRYIKNFLLNRSILDGYGSKLMVGRFPIAVIDIQIDPYLADVNVHPTKQEVRISKERELMSLISTAISESLKQYDLIPDALENLAKTSTRSVDKPIQTSFSLKQPGLYYDRAKNDFFIGADTVSEPIANFTNLDKSDGSVDNDVKNSVNQGATQSPNIKYASRDQADSENFIHSQDYLSSKQSLNKLVEKLDSEESSTFPELEFFGQMHGTYLFAQGNGGLYIIDQHAAQERVKYEYYREKIGEVDNSLQQLLVPFLFEFSSSDFLQLQEKMSLLQDVGIFLEPYGNNTFILREHPIWMKEEEVESGIYEMCDMLLLTNEVSVKKYRAELAIMMSCKRSIKANHTLDDYSARHLLDQLAQCKNPYNCPHGRPVLVNFTKADMEKMFKRIQENHTSLRDLGKY.

It belongs to the DNA mismatch repair MutL/HexB family.

In terms of biological role, this protein is involved in the repair of mismatches in DNA. It is required for dam-dependent methyl-directed DNA mismatch repair. May act as a 'molecular matchmaker', a protein that promotes the formation of a stable complex between two or more DNA-binding proteins in an ATP-dependent manner without itself being part of a final effector complex. In Streptococcus agalactiae serotype III (strain NEM316), this protein is DNA mismatch repair protein MutL.